A 525-amino-acid polypeptide reads, in one-letter code: BTB/POZ domain-containing protein 2 (525 aa).

Residues 1 to 86 (MAAGGSGGRA…AEEAAGPGAA (86 aa)) form a disordered region. A compositionally biased stretch (gly residues) spans 16–26 (VGVGPGTGGSP). Residues 27 to 55 (GPSANAAATPAPGNAAAAAAAAAAAAAAP) show a composition bias toward low complexity. The segment covering 56 to 65 (GPTPPAPPGP) has biased composition (pro residues). Residues 66-86 (GTDAQAAGAERAEEAAGPGAA) are compositionally biased toward low complexity. The region spanning 117–187 (CDVHFLVGKG…LYSDEVQIGP (71 aa)) is the BTB domain.

Interacts with topoisomerase 1 and with TRIM5 isoform Delta.

Its subcellular location is the cytoplasm. This is BTB/POZ domain-containing protein 2 (BTBD2) from Homo sapiens (Human).